Reading from the N-terminus, the 344-residue chain is Methionine import ATP-binding protein MetN (344 aa).

An ABC transporter domain is found at 2-241 (IELQGLSQRF…PQHDVTRAMI (240 aa)). 38–45 (GRSGAGKS) is a binding site for ATP.

It belongs to the ABC transporter superfamily. Methionine importer (TC 3.A.1.24) family. The complex is composed of two ATP-binding proteins (MetN), two transmembrane proteins (MetI) and a solute-binding protein (MetQ).

The protein resides in the cell inner membrane. The catalysed reaction is L-methionine(out) + ATP + H2O = L-methionine(in) + ADP + phosphate + H(+). It catalyses the reaction D-methionine(out) + ATP + H2O = D-methionine(in) + ADP + phosphate + H(+). Functionally, part of the ABC transporter complex MetNIQ involved in methionine import. Responsible for energy coupling to the transport system. This Cupriavidus necator (strain ATCC 17699 / DSM 428 / KCTC 22496 / NCIMB 10442 / H16 / Stanier 337) (Ralstonia eutropha) protein is Methionine import ATP-binding protein MetN.